Reading from the N-terminus, the 560-residue chain is E3 SUMO-protein ligase CBX4 (560 aa).

An involved in interaction with H3C15 and H3C1 region spans residues 1–75 (MELPAVGEHV…LMGYRKRGPK (75 aa)). The tract at residues 1 to 539 (MELPAVGEHV…LSEFKPFFGN (539 aa)) is interaction with BMI1. In terms of domain architecture, Chromo spans 11 to 69 (FAVESIEKKRIRKGRVEYLVKWRGWSPKYNTWEPEENILDPRLLIAFQNRERQEQLMGY). Residues lysine 77, lysine 106, lysine 114, and lysine 125 each participate in a glycyl lysine isopeptide (Lys-Gly) (interchain with G-Cter in SUMO2) cross-link. The tract at residues 92 to 152 (VLTGLQDSST…PPGKSGKYYY (61 aa)) is disordered. At lysine 149 the chain carries N6-acetyllysine; alternate. Lysine 149 participates in a covalent cross-link: Glycyl lysine isopeptide (Lys-Gly) (interchain with G-Cter in SUMO2); alternate. Residues lysine 157, lysine 167, and lysine 178 each participate in a glycyl lysine isopeptide (Lys-Gly) (interchain with G-Cter in SUMO2) cross-link. Serine 182 carries the phosphoserine modification. Glycyl lysine isopeptide (Lys-Gly) (interchain with G-Cter in SUMO2) cross-links involve residues lysine 191, lysine 205, lysine 212, lysine 223, lysine 249, lysine 268, lysine 278, and lysine 280. Residues 217-243 (AAGAPGKGSEKGPPNGMMPAPKEAVTG) are disordered. 2 stretches are compositionally biased toward basic and acidic residues: residues 281–291 (SGEVAEGEARS) and 298–331 (AADE…REEE). The tract at residues 281-404 (SGEVAEGEAR…HHHHHHAVGL (124 aa)) is disordered. Residues lysine 320, lysine 352, and lysine 365 each participate in a glycyl lysine isopeptide (Lys-Gly) (interchain with G-Cter in SUMO2) cross-link. Positions 380–401 (PSHHPHPHPHHHHHHHHHHHHA) are enriched in basic residues. Serine 467 bears the Phosphoserine mark. A Glycyl lysine isopeptide (Lys-Gly) (interchain with G-Cter in SUMO2); alternate cross-link involves residue lysine 494. Residue lysine 494 forms a Glycyl lysine isopeptide (Lys-Gly) (interchain with G-Cter in SUMO); alternate linkage. Residue threonine 497 is modified to Phosphothreonine; by HIPK2. Low complexity predominate over residues 509 to 521 (AAPTTTAEKPPAE). The disordered stretch occupies residues 509-528 (AAPTTTAEKPPAEAQDEPAE). The tract at residues 531-556 (SEFKPFFGNIIITDVTANCLTVTFKE) is involved in interaction with H3C15 and RNF2. Positions 540-560 (IIITDVTANCLTVTFKEYVTV) are interaction with RNF2.

As to quaternary structure, interacts with histone H3-K9Me3. Interacts with CHTOP. Component of a PRC1-like complex. The composition of the PRC1 complex differs between the PRC1 complex in pluripotent embryonic stem cells containing RNF2, CBX7 and PCGF2, and the PRC1 complex in differentiating cells containing RNF2, CBX2, CBX4 and BMI1. Self-associates. Interacts with SUV39H1 and HIPK2. Interacts with CSNK2B. May interact with H3C15, H3C1 and RNF2. Interacts with SUMO1P1/SUMO5. Interacts with PRDM1/Blimp-1. Ubiquitinated. Ubiquitination regulates the function of the Polycomb group (PcG) multiprotein PRC1-like complex. Deubiquitinated by USP26. In terms of processing, phosphorylated on Thr-497 by HIPK2 upon DNA damage. This phosphorylation stimulates E3 SUMO-protein ligase activity and promotes sumoylation on Lys-494, as well as sumoylation of other target proteins, such as HNRNPK. Ubiquitous.

The protein resides in the nucleus. The protein localises to the nucleus speckle. It functions in the pathway protein modification; protein sumoylation. Functionally, E3 SUMO-protein ligase that catalyzes sumoylation of target proteins by promoting the transfer of SUMO from the E2 enzyme to the substrate. Involved in the sumoylation of HNRNPK, a p53/TP53 transcriptional coactivator, hence indirectly regulates p53/TP53 transcriptional activation resulting in p21/CDKN1A expression. Monosumoylates ZNF131. Its function is as follows. Component of a Polycomb group (PcG) multiprotein PRC1-like complex, a complex class required to maintain the transcriptionally repressive state of many genes, including Hox genes, throughout development. PcG PRC1 complex acts via chromatin remodeling and modification of histones; it mediates monoubiquitination of histone H2A 'Lys-119', rendering chromatin heritably changed in its expressibility. Binds to histone H3 trimethylated at 'Lys-9' (H3K9me3). Plays a role in the lineage differentiation of the germ layers in embryonic development. The protein is E3 SUMO-protein ligase CBX4 (CBX4) of Homo sapiens (Human).